A 329-amino-acid polypeptide reads, in one-letter code: Mas-related G-protein coupled receptor member X2 (329 aa).

Residues 1–33 are Extracellular-facing; it reads MDPTTPAWGTESTTMNGNDQALPLLCGKETMIS. The chain crosses the membrane as a helical span at residues 34 to 54; it reads VFLILFIALVGLVGNAFVLWL. Over 55–63 the chain is Cytoplasmic; it reads LGFRMRRNA. Residues 64–84 form a helical membrane-spanning segment; it reads FSVYVLSLAGADFLFLCFQMT. Topologically, residues 85–96 are extracellular; sequence SCLAYLINFFGS. A helical membrane pass occupies residues 97–116; that stretch reads ISINIPSFFTVMTCAYLAGL. At 117–143 the chain is on the cytoplasmic side; the sequence is SMLSAISTERCLSVLWPIWYRCRRPRH. Residues 144–164 form a helical membrane-spanning segment; sequence LSAVMCVLLWALSLLLSILEG. Topologically, residues 165 to 183 are extracellular; sequence KFCGFLFSDDDPGWCQTFD. Residues 184 to 204 traverse the membrane as a helical segment; that stretch reads FITAAWLMFLFVVLCGSSLAL. The Cytoplasmic portion of the chain corresponds to 205-227; sequence LVRILCGSRSLPLTRLYLTILLT. A helical transmembrane segment spans residues 228–248; sequence VLIFLLCGLPFGIQWFLILWI. At 249–263 the chain is on the extracellular side; the sequence is WKNSVVLFCHIHPIS. The helical transmembrane segment at 264 to 284 threads the bilayer; that stretch reads VVLSSFNSSANPIIYFFVGSF. The Cytoplasmic portion of the chain corresponds to 285–329; sequence RKQWRLRQPILKLALQRALQDTAEVDHSEGCFSQGTLEMSRSSLV.

The protein belongs to the G-protein coupled receptor 1 family. Mas subfamily.

The protein resides in the cell membrane. Its function is as follows. Mast cell-specific receptor for basic secretagogues, i.e. cationic amphiphilic drugs, as well as endo- or exogenous peptides, consisting of a basic head group and a hydrophobic core. Recognizes and binds small molecules containing a cyclized tetrahydroisoquinoline (THIQ), such as non-steroidal neuromuscular blocking drugs (NMBDs), including tubocurarine and atracurium. In response to these compounds, mediates pseudo-allergic reactions characterized by histamine release, inflammation and airway contraction. The polypeptide is Mas-related G-protein coupled receptor member X2 (MRGPRX2) (Macaca mulatta (Rhesus macaque)).